A 1432-amino-acid polypeptide reads, in one-letter code: Probable ATP-dependent RNA helicase spindle-E (1432 aa).

Residues 124-291 (LAAINAHPVV…FTTTNSVPPV (168 aa)) enclose the Helicase ATP-binding domain. 137–144 (GQTGCGKT) is an ATP binding site. The DEAH box signature appears at 237-240 (DEVH). In terms of domain architecture, Helicase C-terminal spans 337 to 524 (KIIMVIDNME…NSVLRAKELE (188 aa)). Residues 936–999 (AGAITKGMMV…RLMPKELIQQ (64 aa)) form the Tudor domain.

The protein belongs to the DEAD box helicase family. DEAH subfamily.

Its subcellular location is the cytoplasm. It catalyses the reaction ATP + H2O = ADP + phosphate + H(+). Probable ATP-binding RNA helicase which plays a central role during spermatogenesis and oogenesis by repressing transposable elements and preventing their mobilization, which is essential for the germline integrity. Acts via the piRNA metabolic process, which mediates the repression of transposable elements during meiosis by forming complexes composed of piRNAs and Piwi and govern the methylation and subsequent repression of transposons. Involved in the repression of LTR retrotransposon copia. Also involved in telomere regulation by repressing specialized telomeric retroelements HeT-A, TAHRE, and TART; Drosophila telomeres being maintained by transposition of specialized telomeric retroelements. Involved in telomeric trans-silencing, a repression mechanism by which a transposon or a transgene inserted in subtelomeric heterochromatin has the capacity to repress in trans in the female germline, a homologous transposon, or transgene located in euchromatin. Involved in the repression of testis-expressed Stellate genes by the homologous Su(Ste) repeats. Required for anteroposterior and dorsoventral axis formation during oogenesis. This chain is Probable ATP-dependent RNA helicase spindle-E (spn-E), found in Drosophila erecta (Fruit fly).